A 313-amino-acid chain; its full sequence is E3 ubiquitin-protein ligase RNF126 (313 aa).

An N-acetylalanine modification is found at A2. The residue at position 5 (S5) is a Phosphoserine. Residues 5-100 (SPQPGRYFCH…FEIPTFPPGA (96 aa)) form a required for interaction with BAG6 region. Zn(2+)-binding residues include C13, C16, C29, and C32. Residues 13 to 32 (CHCCSVEIVPRLPDYICPRC) form a C4-type zinc finger. 2 disordered regions span residues 42-63 (EETR…QNRQ) and 95-128 (TFPP…RQPR). The segment covering 47-63 (TENGSAPSTAPTDQNRQ) has biased composition (polar residues). Residues 103–116 (DDGRDPESRREREH) show a composition bias toward basic and acidic residues. A compositionally biased stretch (basic residues) spans 117 to 128 (QSRHRYGARQPR). The sufficient for interaction with AICDA stretch occupies residues 202-306 (TGPPPADKEK…SSSSSSSPSN (105 aa)). The RING-type zinc finger occupies 231-272 (CPVCKEDYALGESVRQLPCNHLFHDSCIVPWLEQHDSCPVCR). Residues 279–313 (NTATNPPGLTGVGFSSSSSSSSSSSPSNENATSNS) form a disordered region. Residues 293–313 (SSSSSSSSSSSPSNENATSNS) are compositionally biased toward low complexity.

In terms of assembly, interacts with CCDC50, EGFR, FLT3 and SCAMP3. Interacts with BAG6 (via ubiquitin-like domain); required for BAG6-dependent ubiquitination of proteins mislocalized to the cytosol. Interacts with CDKN1A. Interacts with AICDA. Ubiquitinated. May undergo autoubiquitination. In terms of tissue distribution, detected in B-cells (at protein level).

The protein localises to the cytoplasm. It is found in the nucleus. The catalysed reaction is S-ubiquitinyl-[E2 ubiquitin-conjugating enzyme]-L-cysteine + [acceptor protein]-L-lysine = [E2 ubiquitin-conjugating enzyme]-L-cysteine + N(6)-ubiquitinyl-[acceptor protein]-L-lysine.. The protein operates within protein modification; protein ubiquitination. E3 ubiquitin-protein ligase that mediates ubiquitination oF target proteins. Depending on the associated E2 ligase, mediates 'Lys-27'-, 'Lys-29'-, 'Lys-48'- and/or 'Lys-63'-linked polyubiquitination of substrates. Part of a BAG6-dependent quality control process ensuring that proteins of the secretory pathway that are mislocalized to the cytosol are degraded by the proteasome. Probably acts by providing the ubiquitin ligase activity associated with the BAG6 complex and be responsible for ubiquitination of the hydrophobic mislocalized proteins and their targeting to the proteasome. May also play a role in the endosomal recycling of IGF2R, the cation-independent mannose-6-phosphate receptor. May play a role in the endosomal sorting and degradation of several membrane receptors including EGFR, FLT3, MET and CXCR4, by mediating their ubiquitination. By ubiquitinating CDKN1A/p21 and targeting it for degradation, may also promote cell proliferation. May monoubiquitinate AICDA. Acts as a regulator of DNA repair by mediating 'Lys-27'- and 'Lys-29'-linked polyubiquitination of MRE11, thereby promoting the exonuclease activity of MRE11. The chain is E3 ubiquitin-protein ligase RNF126 from Mus musculus (Mouse).